The sequence spans 82 residues: Small ribosomal subunit protein bS18 (82 aa).

This sequence belongs to the bacterial ribosomal protein bS18 family. As to quaternary structure, part of the 30S ribosomal subunit. Forms a tight heterodimer with protein bS6.

Binds as a heterodimer with protein bS6 to the central domain of the 16S rRNA, where it helps stabilize the platform of the 30S subunit. In Rhizobium rhizogenes (strain K84 / ATCC BAA-868) (Agrobacterium radiobacter), this protein is Small ribosomal subunit protein bS18.